A 470-amino-acid polypeptide reads, in one-letter code: Putative dipeptidase TSTA_079200 (470 aa).

The chain crosses the membrane as a helical span at residues 40-60 (AWLFGLGTLGIILASVLLNPF). Zn(2+) is bound by residues His92 and Asp94. Cys143 and Cys237 form a disulfide bridge. N-linked (GlcNAc...) asparagine glycosylation occurs at Asn188. Glu208 contributes to the Zn(2+) binding site. His235 serves as a coordination point for substrate. Residues His279 and His300 each contribute to the Zn(2+) site. Residues Arg311 and Asp371 each contribute to the substrate site.

Belongs to the metallo-dependent hydrolases superfamily. Peptidase M19 family. Zn(2+) is required as a cofactor.

The protein resides in the membrane. The enzyme catalyses an L-aminoacyl-L-amino acid + H2O = 2 an L-alpha-amino acid. Hydrolyzes a wide range of dipeptides. This Talaromyces stipitatus (strain ATCC 10500 / CBS 375.48 / QM 6759 / NRRL 1006) (Penicillium stipitatum) protein is Putative dipeptidase TSTA_079200.